The following is a 207-amino-acid chain: Non-structural protein 5 (207 aa).

Residues 2–69 enclose the DRBM domain; sequence DPVSVVHSFA…CVLISNDLKE (68 aa).

The polypeptide is Non-structural protein 5 (Segment-12) (Banna virus (BAV)).